Reading from the N-terminus, the 421-residue chain is Acetate kinase (421 aa).

N7 is a binding site for Mg(2+). ATP is bound at residue K14. Position 91 (R91) interacts with substrate. Residue D148 is the Proton donor/acceptor of the active site. ATP contacts are provided by residues 208-212 and 283-285; these read HIGNG and DRR. Position 387 (E387) interacts with Mg(2+).

It belongs to the acetokinase family. In terms of assembly, homodimer. Mg(2+) serves as cofactor. It depends on Mn(2+) as a cofactor.

Its subcellular location is the cytoplasm. The enzyme catalyses acetate + ATP = acetyl phosphate + ADP. It functions in the pathway metabolic intermediate biosynthesis; acetyl-CoA biosynthesis; acetyl-CoA from acetate: step 1/2. Its function is as follows. Catalyzes the formation of acetyl phosphate from acetate and ATP. Can also catalyze the reverse reaction. The protein is Acetate kinase of Trichlorobacter lovleyi (strain ATCC BAA-1151 / DSM 17278 / SZ) (Geobacter lovleyi).